A 572-amino-acid polypeptide reads, in one-letter code: Ribonuclease Y (572 aa).

A helical transmembrane segment spans residues 1 to 21; it reads MPTLYVILSLLLGLIGGVLVQ. Disordered stretches follow at residues 59–85 and 110–142; these read HEAAEQDRQDAISKTQDAARRVQDAAE and QLEAEREQAKADAAQQREALSTDRQETRRERED. 2 stretches are compositionally biased toward basic and acidic residues: residues 110-119 and 129-142; these read QLEAEREQAK and LSTDRQETRRERED. The 61-residue stretch at 262-322 folds into the KH domain; that stretch reads SVSVVPIPSD…LRREVARHVL (61 aa). The region spanning 388–481 is the HD domain; it reads VLKHSVQVAH…VAAADAISAA (94 aa).

This sequence belongs to the RNase Y family.

It localises to the cell membrane. Its function is as follows. Endoribonuclease that initiates mRNA decay. The sequence is that of Ribonuclease Y from Deinococcus radiodurans (strain ATCC 13939 / DSM 20539 / JCM 16871 / CCUG 27074 / LMG 4051 / NBRC 15346 / NCIMB 9279 / VKM B-1422 / R1).